The following is a 294-amino-acid chain: Halotolerance protein HAL1 (294 aa).

Positions 115–153 are disordered; that stretch reads LKRGTKEQEDINSSTSKKSAVINNFSGEKTPNPRPQSSN. Residues 125 to 153 are compositionally biased toward polar residues; the sequence is INSSTSKKSAVINNFSGEKTPNPRPQSSN. Phosphoserine is present on serine 266.

It localises to the cytoplasm. Functionally, involved in salt tolerance. The chain is Halotolerance protein HAL1 (HAL1) from Saccharomyces cerevisiae (strain ATCC 204508 / S288c) (Baker's yeast).